We begin with the raw amino-acid sequence, 955 residues long: Leucine--tRNA ligase (955 aa).

The 'HIGH' region signature appears at 51–61 (PYLNGVLHAGH). A 'KMSKS' region motif is present at residues 647 to 651 (KLSKS). Lys650 is an ATP binding site.

Belongs to the class-I aminoacyl-tRNA synthetase family.

The protein localises to the cytoplasm. The catalysed reaction is tRNA(Leu) + L-leucine + ATP = L-leucyl-tRNA(Leu) + AMP + diphosphate. This is Leucine--tRNA ligase from Methanococcus maripaludis (strain C7 / ATCC BAA-1331).